Here is a 603-residue protein sequence, read N- to C-terminus: Serine/threonine-protein kinase PLK1 (603 aa).

Lys-19 is covalently cross-linked (Glycyl lysine isopeptide (Lys-Gly) (interchain with G-Cter in ubiquitin)). The region spanning 53–305 (YVRGRFLGKG…IHELLNDEFF (253 aa)) is the Protein kinase domain. ATP is bound by residues 59-67 (LGKGGFAKC) and Lys-82. Residue Ser-103 is modified to Phosphoserine. Position 131 (Glu-131) interacts with ATP. Ser-137 is subject to Phosphoserine. Asp-176 acts as the Proton acceptor in catalysis. ATP contacts are provided by residues 178-181 (KLGN) and Asp-194. Residues 194 to 221 (DFGLATKVEYEGERKKTLCGTPNYIAPE) are activation loop. Thr-210 bears the Phosphothreonine; by AURKA mark. Position 214 is a phosphothreonine (Thr-214). Phosphoserine; by autocatalysis is present on residues Ser-269 and Ser-335. The short motif at 337 to 340 (RKPL) is the D-box that targets the protein for proteasomal degradation in anaphase element. Residue Lys-338 forms a Glycyl lysine isopeptide (Lys-Gly) (interchain with G-Cter in SUMO2) linkage. A phosphoserine mark is found at Ser-375 and Ser-450. One can recognise a POLO box 1 domain in the interval 410–488 (WVSKWVDYSD…LNYFRNYMSE (79 aa)). Lys-492 participates in a covalent cross-link: Glycyl lysine isopeptide (Lys-Gly) (interchain with G-Cter in ubiquitin). A linker region spans residues 493-507 (AGANITPREGDELAR). A Phosphothreonine modification is found at Thr-498. The 83-residue stretch at 510–592 (YLRTWFRTRS…ARTMVDKLLS (83 aa)) folds into the POLO box 2 domain. The interval 538-540 (HTK) is important for interaction with phosphorylated proteins.

This sequence belongs to the protein kinase superfamily. Ser/Thr protein kinase family. CDC5/Polo subfamily. In terms of assembly, interacts with CEP170 and EVI5. Interacts and phosphorylates ERCC6L. Interacts with FAM29A. Interacts with SLX4/BTBD12 and TTDN1. Interacts with BUB1B. Interacts (via POLO-box domain) with the phosphorylated form of BUB1, CENPU and CDC25C. Interacts with isoform 3 of SGO1. Interacts with BORA, KIF2A and AURKA. Interacts with TOPORS and CYLD. Interacts with ECT2; the interaction is stimulated upon phosphorylation of ECT2 on 'Thr-444'. Interacts with PRC1. Interacts with KIF20A/MKLP2 (when phosphorylated), leading to the recruitment at the central spindle. Interacts (via POLO box domains) with PPP1R12A/MYPT1 (when previously phosphorylated by CDK1). Part of an astrin (SPAG5)-kinastrin (SKAP) complex containing KNSTRN, SPAG5, PLK1, DYNLL1 and SGO2A. Interacts with BIRC6/bruce. Interacts with CDK1-phosphorylated DCTN6 during mitotic prometaphase; the interaction facilitates recruitment to kinetochores. Interacts with CDK1-phosphorylated FRY; this interaction occurs in mitotic cells, but not in interphase cells. FRY interaction facilitates AURKA-mediated PLK1 phosphorylation. Interacts with CEP68; the interaction phosphorylates CEP68. Interacts (via POLO-box domain) with DCTN1. Interacts with CEP20 in later G1, S, G2 and M phases of the cell cycle; this interaction recruits PLK1 to centrosomes, a step required for S phase progression. Interacts with HSF1; this interaction increases upon heat shock but does not modulate neither HSF1 homotrimerization nor DNA-binding activities. Interacts with HNRNPU; this interaction induces phosphorylation of HNRNPU in mitosis. Interacts (via its N-terminus) with RIOK2. Interacts with KLHL22. Interacts (via POLO box domains) with NEDD9/HEF1 (via C-terminus). Interacts (via RVxF motif) with FIRRM; regulates PLK1 kinase activity. Interacts with SKA3; the interaction promotes the stability of PLK1. Interacts with the MTMR3:MTMR4 heterooligomer; brings CEP55 and PLK1 together during early mitosis, regulating the phosphorylation of CEP55 by PLK1 and its recruitment to the midbody where it can mediate cell abscission. In terms of processing, catalytic activity is enhanced by phosphorylation of Thr-210. Phosphorylation at Thr-210 is first detected on centrosomes in the G2 phase of the cell cycle, peaks in prometaphase and gradually disappears from centrosomes during anaphase. Dephosphorylation at Thr-210 at centrosomes is probably mediated by protein phosphatase 1C (PP1C), via interaction with PPP1R12A/MYPT1. Autophosphorylation and phosphorylation of Ser-137 may not be significant for the activation of PLK1 during mitosis, but may enhance catalytic activity during recovery after DNA damage checkpoint. Phosphorylated in vitro by STK10. Ubiquitinated by the anaphase promoting complex/cyclosome (APC/C) in anaphase and following DNA damage, leading to its degradation by the proteasome. Ubiquitination is mediated via its interaction with FZR1/CDH1. Ubiquitination and subsequent degradation prevents entry into mitosis and is essential to maintain an efficient G2 DNA damage checkpoint. Monoubiquitination at Lys-492 by the BCR(KLHL22) ubiquitin ligase complex does not lead to degradation: it promotes PLK1 dissociation from phosphoreceptor proteins and subsequent removal from kinetochores, allowing silencing of the spindle assembly checkpoint (SAC) and chromosome segregation. In terms of tissue distribution, newborn and adult spleen, fetal and newborn kidney, liver, brain, thymus and adult bone marrow, thymus, ovary and testes.

The protein resides in the nucleus. It localises to the chromosome. Its subcellular location is the centromere. The protein localises to the kinetochore. It is found in the cytoplasm. The protein resides in the cytoskeleton. It localises to the microtubule organizing center. Its subcellular location is the centrosome. The protein localises to the spindle. It is found in the midbody. The catalysed reaction is L-seryl-[protein] + ATP = O-phospho-L-seryl-[protein] + ADP + H(+). The enzyme catalyses L-threonyl-[protein] + ATP = O-phospho-L-threonyl-[protein] + ADP + H(+). Its activity is regulated as follows. Activated by phosphorylation of Thr-210 by AURKA; phosphorylation by AURKA is enhanced by BORA. Once activated, activity is stimulated by binding target proteins. Binding of target proteins has no effect on the non-activated kinase. Several inhibitors targeting PLKs are currently in development and are under investigation in a growing number of clinical trials, such as BI 2536, an ATP-competitive PLK1 inhibitor or BI 6727, a dihydropteridinone that specifically inhibits the catalytic activity of PLK1. Its function is as follows. Serine/threonine-protein kinase that performs several important functions throughout M phase of the cell cycle, including the regulation of centrosome maturation and spindle assembly, the removal of cohesins from chromosome arms, the inactivation of anaphase-promoting complex/cyclosome (APC/C) inhibitors, and the regulation of mitotic exit and cytokinesis. Polo-like kinase proteins act by binding and phosphorylating proteins that are already phosphorylated on a specific motif recognized by the POLO box domains. Phosphorylates BORA, BUB1B/BUBR1, CCNB1, CDC25C, CEP55, ECT2, ERCC6L, FBXO5/EMI1, FOXM1, KIF20A/MKLP2, CENPU, NEDD1, NINL, NPM1, NUDC, PKMYT1/MYT1, KIZ, MRE11, PPP1R12A/MYPT1, POLQ, PRC1, RACGAP1/CYK4, RAD51, RHNO1, SGO1, STAG2/SA2, TEX14, TOPORS, p73/TP73, TPT1, WEE1 and HNRNPU. Plays a key role in centrosome functions and the assembly of bipolar spindles by phosphorylating KIZ, NEDD1 and NINL. NEDD1 phosphorylation promotes subsequent targeting of the gamma-tubulin ring complex (gTuRC) to the centrosome, an important step for spindle formation. Phosphorylation of NINL component of the centrosome leads to NINL dissociation from other centrosomal proteins. Involved in mitosis exit and cytokinesis by phosphorylating CEP55, ECT2, KIF20A/MKLP2, CENPU, PRC1 and RACGAP1. Recruited at the central spindle by phosphorylating and docking PRC1 and KIF20A/MKLP2; creates its own docking sites on PRC1 and KIF20A/MKLP2 by mediating phosphorylation of sites subsequently recognized by the POLO box domains. Phosphorylates RACGAP1, thereby creating a docking site for the Rho GTP exchange factor ECT2 that is essential for the cleavage furrow formation. Promotes the central spindle recruitment of ECT2. Plays a central role in G2/M transition of mitotic cell cycle by phosphorylating CCNB1, CDC25C, FOXM1, CENPU, PKMYT1/MYT1, PPP1R12A/MYPT1 and WEE1. Part of a regulatory circuit that promotes the activation of CDK1 by phosphorylating the positive regulator CDC25C and inhibiting the negative regulators WEE1 and PKMYT1/MYT1. Also acts by mediating phosphorylation of cyclin-B1 (CCNB1) on centrosomes in prophase. Phosphorylates FOXM1, a key mitotic transcription regulator, leading to enhance FOXM1 transcriptional activity. Involved in kinetochore functions and sister chromatid cohesion by phosphorylating BUB1B/BUBR1, FBXO5/EMI1 and STAG2/SA2. PLK1 is high on non-attached kinetochores suggesting a role of PLK1 in kinetochore attachment or in spindle assembly checkpoint (SAC) regulation. Required for kinetochore localization of BUB1B. Regulates the dissociation of cohesin from chromosomes by phosphorylating cohesin subunits such as STAG2/SA2. Phosphorylates SGO1: required for spindle pole localization of isoform 3 of SGO1 and plays a role in regulating its centriole cohesion function. Mediates phosphorylation of FBXO5/EMI1, a negative regulator of the APC/C complex during prophase, leading to FBXO5/EMI1 ubiquitination and degradation by the proteasome. Acts as a negative regulator of p53 family members: phosphorylates TOPORS, leading to inhibit the sumoylation of p53/TP53 and simultaneously enhance the ubiquitination and subsequent degradation of p53/TP53. Phosphorylates the transactivation domain of the transcription factor p73/TP73, leading to inhibit p73/TP73-mediated transcriptional activation and pro-apoptotic functions. Phosphorylates BORA, and thereby promotes the degradation of BORA. Contributes to the regulation of AURKA function. Also required for recovery after DNA damage checkpoint and entry into mitosis. Phosphorylates MISP, leading to stabilization of cortical and astral microtubule attachments required for proper spindle positioning. Together with MEIKIN, acts as a regulator of kinetochore function during meiosis I: required both for mono-orientation of kinetochores on sister chromosomes and protection of centromeric cohesin from separase-mediated cleavage. Phosphorylates CEP68 and is required for its degradation. Regulates nuclear envelope breakdown during prophase by phosphorylating DCTN1 resulting in its localization in the nuclear envelope. Phosphorylates the heat shock transcription factor HSF1, promoting HSF1 nuclear translocation upon heat shock. Phosphorylates HSF1 also in the early mitotic period; this phosphorylation regulates HSF1 localization to the spindle pole, the recruitment of the SCF(BTRC) ubiquitin ligase complex induicing HSF1 degradation, and hence mitotic progression. Regulates mitotic progression by phosphorylating RIOK2. Through the phosphorylation of DZIP1 regulates the localization during mitosis of the BBSome, a ciliary protein complex involved in cilium biogenesis. Regulates DNA repair during mitosis by mediating phosphorylation of POLQ and RHNO1, thereby promoting POLQ recruitment to DNA damage sites. Phosphorylates ATXN10 which may play a role in the regulation of cytokinesis and may stimulate the proteasome-mediated degradation of ATXN10. The chain is Serine/threonine-protein kinase PLK1 (Plk1) from Mus musculus (Mouse).